Reading from the N-terminus, the 182-residue chain is ATP-dependent protease subunit HslV (182 aa).

Residue Thr10 is part of the active site. Ala164, Cys167, and Thr170 together coordinate Na(+).

The protein belongs to the peptidase T1B family. HslV subfamily. As to quaternary structure, a double ring-shaped homohexamer of HslV is capped on each side by a ring-shaped HslU homohexamer. The assembly of the HslU/HslV complex is dependent on binding of ATP.

The protein localises to the cytoplasm. It carries out the reaction ATP-dependent cleavage of peptide bonds with broad specificity.. Its activity is regulated as follows. Allosterically activated by HslU binding. Functionally, protease subunit of a proteasome-like degradation complex believed to be a general protein degrading machinery. In Chelativorans sp. (strain BNC1), this protein is ATP-dependent protease subunit HslV.